Here is an 89-residue protein sequence, read N- to C-terminus: MAHKKAGGSSRNGRDSAGKRLGIKAYGGEHVIPGNIIARQRGTTWHPGLNVGMGTDHTLFAKVEGRVEFRAKANGRTFVSVLPIAQAAE.

The segment at 1–20 (MAHKKAGGSSRNGRDSAGKR) is disordered.

Belongs to the bacterial ribosomal protein bL27 family.

The polypeptide is Large ribosomal subunit protein bL27 (Rhodopseudomonas palustris (strain HaA2)).